A 206-amino-acid chain; its full sequence is Small ribosomal subunit protein uS4 (206 aa).

The 61-residue stretch at 96–156 folds into the S4 RNA-binding domain; sequence CRLDNVVYRM…EKAKNQLRIV (61 aa).

It belongs to the universal ribosomal protein uS4 family. As to quaternary structure, part of the 30S ribosomal subunit. Contacts protein S5. The interaction surface between S4 and S5 is involved in control of translational fidelity.

In terms of biological role, one of the primary rRNA binding proteins, it binds directly to 16S rRNA where it nucleates assembly of the body of the 30S subunit. Functionally, with S5 and S12 plays an important role in translational accuracy. This chain is Small ribosomal subunit protein uS4, found in Pseudomonas fluorescens (strain Pf0-1).